We begin with the raw amino-acid sequence, 71 residues long: Protein translocase subunit SecE (71 aa).

The chain crosses the membrane as a helical span at residues 43–63 (VAGVGILAVGAIGFIIYVLLT).

This sequence belongs to the SecE/SEC61-gamma family. Component of the Sec protein translocase complex. Heterotrimer consisting of SecY (alpha), SecG (beta) and SecE (gamma) subunits. The heterotrimers can form oligomers, although 1 heterotrimer is thought to be able to translocate proteins. Interacts with the ribosome. May interact with SecDF, and other proteins may be involved.

It localises to the cell membrane. Essential subunit of the Sec protein translocation channel SecYEG. Clamps together the 2 halves of SecY. May contact the channel plug during translocation. In Methanosarcina barkeri (strain Fusaro / DSM 804), this protein is Protein translocase subunit SecE.